Consider the following 398-residue polypeptide: Phosphoglycerate kinase (398 aa).

Residues 23-25 (DLN), R38, 61-64 (HFGR), R120, and R153 contribute to the substrate site. Residues K203, E325, and 355–358 (GGDT) each bind ATP.

This sequence belongs to the phosphoglycerate kinase family. Monomer.

It is found in the cytoplasm. It carries out the reaction (2R)-3-phosphoglycerate + ATP = (2R)-3-phospho-glyceroyl phosphate + ADP. It participates in carbohydrate degradation; glycolysis; pyruvate from D-glyceraldehyde 3-phosphate: step 2/5. This is Phosphoglycerate kinase from Chelativorans sp. (strain BNC1).